The chain runs to 336 residues: MRPILLSGHERSLTQVKYNREGDLLFSCSKDHIINVWFTHNGERLGTYNGHNGTVWSVDVDSKSEFMVSGSADNSMRLWKVSTGECLKAWEFPTAIKRVSWSEDDTKIALVTEQRMGHQGAVRVFEINRDGGPQPDEPLLVFNPIGSKAQVVAFSSLDKHLITGHENGKVALWDVNTGEEVASKEKNHIGLITDLQMSADRTYFVTSSKDKSARLYDSRTLEVIKSYQDPQTPLNSAALIPGKPYLLMGGGQEAMAVTTTSARQGHFEIRMWHVVFEEEVSRIKGGFGPCNSIAVHPEGKGYAIGGEDGYVRLHHFDENTFRAKPYGHETEPKELD.

6 WD repeats span residues 8–49 (GHER…GTYN), 50–91 (GHNG…KAWE), 93–135 (PTAI…GPQP), 144–183 (PIGS…EVAS), 187–226 (NHIG…VIKS), and 285–324 (GGFG…FRAK).

It belongs to the eIF-3 subunit I family. In terms of assembly, component of the eukaryotic translation initiation factor 3 (eIF-3) complex.

It is found in the cytoplasm. Component of the eukaryotic translation initiation factor 3 (eIF-3) complex, which is involved in protein synthesis of a specialized repertoire of mRNAs and, together with other initiation factors, stimulates binding of mRNA and methionyl-tRNAi to the 40S ribosome. The eIF-3 complex specifically targets and initiates translation of a subset of mRNAs involved in cell proliferation. The protein is Eukaryotic translation initiation factor 3 subunit I of Puccinia graminis f. sp. tritici (strain CRL 75-36-700-3 / race SCCL) (Black stem rust fungus).